The sequence spans 342 residues: S-adenosylmethionine:tRNA ribosyltransferase-isomerase (342 aa).

Belongs to the QueA family. As to quaternary structure, monomer.

Its subcellular location is the cytoplasm. It carries out the reaction 7-aminomethyl-7-carbaguanosine(34) in tRNA + S-adenosyl-L-methionine = epoxyqueuosine(34) in tRNA + adenine + L-methionine + 2 H(+). It participates in tRNA modification; tRNA-queuosine biosynthesis. Functionally, transfers and isomerizes the ribose moiety from AdoMet to the 7-aminomethyl group of 7-deazaguanine (preQ1-tRNA) to give epoxyqueuosine (oQ-tRNA). The sequence is that of S-adenosylmethionine:tRNA ribosyltransferase-isomerase from Campylobacter jejuni subsp. jejuni serotype O:2 (strain ATCC 700819 / NCTC 11168).